The sequence spans 335 residues: Beta-ketoacyl-[acyl-carrier-protein] synthase III (335 aa).

Active-site residues include C117 and H258. The ACP-binding stretch occupies residues 259 to 263 (QANQR). N288 is an active-site residue.

This sequence belongs to the thiolase-like superfamily. FabH family. Homodimer.

Its subcellular location is the cytoplasm. The enzyme catalyses malonyl-[ACP] + acetyl-CoA + H(+) = 3-oxobutanoyl-[ACP] + CO2 + CoA. Its pathway is lipid metabolism; fatty acid biosynthesis. Catalyzes the condensation reaction of fatty acid synthesis by the addition to an acyl acceptor of two carbons from malonyl-ACP. Catalyzes the first condensation reaction which initiates fatty acid synthesis and may therefore play a role in governing the total rate of fatty acid production. Possesses both acetoacetyl-ACP synthase and acetyl transacylase activities. Its substrate specificity determines the biosynthesis of branched-chain and/or straight-chain of fatty acids. This is Beta-ketoacyl-[acyl-carrier-protein] synthase III from Synechococcus elongatus (strain ATCC 33912 / PCC 7942 / FACHB-805) (Anacystis nidulans R2).